Consider the following 20-residue polypeptide: 54 kDa cell wall protein (20 aa).

The tract at residues K1–R20 is disordered.

It localises to the secreted. Its subcellular location is the cell wall. The sequence is that of 54 kDa cell wall protein from Arabidopsis thaliana (Mouse-ear cress).